The chain runs to 76 residues: MIFFTRNHRAINAHFLYDHNDRQILNRQFPPDNITMEERAVIKSVGRELSRIMCIVETNVLTRAGGYFSIFYRDFD.

This is an uncharacterized protein from Magallana gigas (Pacific oyster).